Here is a 374-residue protein sequence, read N- to C-terminus: Chaperone protein DnaJ (374 aa).

Residues 5–70 (DYYEVLGVNL…RKRASYDQFG (66 aa)) enclose the J domain. The CR-type zinc finger occupies 133 to 210 (GLSRTIKVPT…CHGQGRQQQT (78 aa)). Zn(2+) contacts are provided by Cys-146, Cys-149, Cys-162, Cys-165, Cys-184, Cys-187, Cys-198, and Cys-201. CXXCXGXG motif repeat units lie at residues 146–153 (CKTCNGSG), 162–169 (CPRCNGSG), 184–191 (CSVCRGRG), and 198–205 (CTDCHGQG).

Belongs to the DnaJ family. As to quaternary structure, homodimer. Requires Zn(2+) as cofactor.

The protein resides in the cytoplasm. Functionally, participates actively in the response to hyperosmotic and heat shock by preventing the aggregation of stress-denatured proteins and by disaggregating proteins, also in an autonomous, DnaK-independent fashion. Unfolded proteins bind initially to DnaJ; upon interaction with the DnaJ-bound protein, DnaK hydrolyzes its bound ATP, resulting in the formation of a stable complex. GrpE releases ADP from DnaK; ATP binding to DnaK triggers the release of the substrate protein, thus completing the reaction cycle. Several rounds of ATP-dependent interactions between DnaJ, DnaK and GrpE are required for fully efficient folding. Also involved, together with DnaK and GrpE, in the DNA replication of plasmids through activation of initiation proteins. The protein is Chaperone protein DnaJ of Coxiella burnetii (strain RSA 331 / Henzerling II).